The chain runs to 200 residues: UPF0488 protein CG14286 (200 aa).

Disordered regions lie at residues 1–28 (MHKR…PVAE) and 139–174 (KDFR…AEAG).

The protein belongs to the UPF0488 family.

The chain is UPF0488 protein CG14286 from Drosophila melanogaster (Fruit fly).